A 143-amino-acid polypeptide reads, in one-letter code: Ribonuclease H (143 aa).

The region spanning 1–141 (MKHVEIFTDG…VDKLASDAAL (141 aa)) is the RNase H type-1 domain. Mg(2+)-binding residues include D9, E47, D69, and D133.

Belongs to the RNase H family. Monomer. Requires Mg(2+) as cofactor.

It is found in the cytoplasm. The catalysed reaction is Endonucleolytic cleavage to 5'-phosphomonoester.. In terms of biological role, endonuclease that specifically degrades the RNA of RNA-DNA hybrids. This chain is Ribonuclease H, found in Novosphingobium aromaticivorans (strain ATCC 700278 / DSM 12444 / CCUG 56034 / CIP 105152 / NBRC 16084 / F199).